Reading from the N-terminus, the 310-residue chain is Ribonuclease Z (310 aa).

Residues His60, His62, Asp64, His65, His140, Asp209, and His269 each contribute to the Zn(2+) site. Asp64 (proton acceptor) is an active-site residue.

The protein belongs to the RNase Z family. In terms of assembly, homodimer. Zn(2+) serves as cofactor.

The catalysed reaction is Endonucleolytic cleavage of RNA, removing extra 3' nucleotides from tRNA precursor, generating 3' termini of tRNAs. A 3'-hydroxy group is left at the tRNA terminus and a 5'-phosphoryl group is left at the trailer molecule.. Functionally, zinc phosphodiesterase, which displays some tRNA 3'-processing endonuclease activity. Probably involved in tRNA maturation, by removing a 3'-trailer from precursor tRNA. This chain is Ribonuclease Z, found in Methanococcus maripaludis (strain C7 / ATCC BAA-1331).